The following is a 441-amino-acid chain: Na(+)/H(+) antiporter NhaA 2 (441 aa).

12 helical membrane passes run 34-54 (VGGAVLLVASAVALVWANSPW), 77-97 (LTLGTWAADGLLAVFFLVVGL), 115-135 (ALPMAAAVGGMVVPALIFVAV), 146-166 (GWAIPTATDIAFAVAVLAVIS), 176-196 (FLLTLAVVDDLLAVTVIAVFY), 199-219 (EINLTALGLSIVPLALFALCV), 225-245 (SWWLLLPLGVATWVLMHESGV), 249-269 (VAGVLLGFTVPVLRSVAAGGP), 290-310 (VAVPVFAFFAAGVAIGGVSGL), 317-337 (PITLGIILGLVVGKPVGIFLT), 355-375 (WIDVFGVALLAGIGFTVSLLI), and 389-409 (FVKVGVLTGSLVAALIAAVLL).

It belongs to the NhaA Na(+)/H(+) (TC 2.A.33) antiporter family.

It is found in the cell membrane. The catalysed reaction is Na(+)(in) + 2 H(+)(out) = Na(+)(out) + 2 H(+)(in). Na(+)/H(+) antiporter that extrudes sodium in exchange for external protons. The chain is Na(+)/H(+) antiporter NhaA 2 from Mycobacterium sp. (strain MCS).